The primary structure comprises 139 residues: S-adenosyl-L-methionine-binding protein AF_0241 (139 aa).

Residues 3 to 133 (LKPIGVVKSP…YSPEIDCVNQ (131 aa)) enclose the TsaA-like domain. Residues Gln-16, 20–22 (PRQ), 58–59 (DK), Arg-82, Leu-92, and 113–116 (LDGS) contribute to the S-adenosyl-L-methionine site.

It belongs to the tRNA methyltransferase O family. In terms of assembly, homodimer.

This chain is S-adenosyl-L-methionine-binding protein AF_0241, found in Archaeoglobus fulgidus (strain ATCC 49558 / DSM 4304 / JCM 9628 / NBRC 100126 / VC-16).